A 262-amino-acid chain; its full sequence is Acetylglutamate kinase (262 aa).

Substrate contacts are provided by residues 48–49 (GG), arginine 70, and asparagine 162.

The protein belongs to the acetylglutamate kinase family. ArgB subfamily.

It is found in the cytoplasm. It carries out the reaction N-acetyl-L-glutamate + ATP = N-acetyl-L-glutamyl 5-phosphate + ADP. Its pathway is amino-acid biosynthesis; L-arginine biosynthesis; N(2)-acetyl-L-ornithine from L-glutamate: step 2/4. In terms of biological role, catalyzes the ATP-dependent phosphorylation of N-acetyl-L-glutamate. The chain is Acetylglutamate kinase from Vibrio cholerae serotype O1 (strain ATCC 39541 / Classical Ogawa 395 / O395).